A 411-amino-acid polypeptide reads, in one-letter code: Z-DNA-binding protein 1 (411 aa).

2 Z-binding domains span residues 8–70 and 84–148; these read LSTG…SIGG and SSAQ…HSRQ. Residues Lys-17 and Lys-43 each participate in a glycyl lysine isopeptide (Lys-Gly) (interchain with G-Cter in ubiquitin) cross-link. Positions 60-86 are disordered; that stretch reads SPEPATWSIGGAASGDGAPAIPENSSA. Short sequence motifs (RIP homotypic interaction motif (RHIM)) lie at residues 188–205 and 237–261; these read NSNA…REKA and YIYM…LVGD. 2 disordered regions span residues 263–303 and 332–411; these read GKHP…EGDT and KGEV…LSKQ. 3 stretches are compositionally biased toward polar residues: residues 268–292, 350–371, and 400–411; these read YSFS…NMQT, GTSS…SMLP, and IESSQDTGLSKQ.

In terms of assembly, homodimer. Interacts (via RIP homotypic interaction motif) with RIPK3; leading to RIPK3 activation and necroptosis; interaction is enhanced by CASP6. Interacts (via RIP homotypic interaction motif) with RIPK1. Component of the AIM2 PANoptosome complex, a multiprotein complex that drives inflammatory cell death (PANoptosis). (Microbial infection) Interacts (via RIP homotypic interaction motif) with murid herpesvirus protein RIR1 (via RIP homotypic interaction motif); leading to inhibition of ZBP1-dependent necroptosis. As to quaternary structure, (Microbial infection) Interacts with vaccinia virus E3 protein; leading to inhibit ZBP1-dependent necroptosis. In terms of processing, ubiquitinated; polyubiquitinated following influenza A virus (IAV) infection. Post-translationally, phosphorylated. As to expression, expressed in lung, spleen and liver. Lower levels were seen in heart, kidney and testis. Expression is greatly up-regulated in tumor stromal cells and activated macrophages.

Its subcellular location is the cytoplasm. The protein localises to the nucleus. With respect to regulation, ZBP1-dependent necroptosis is normally inhibited by RIPK1: RIPK1 inhibits the ZBP1-induced activation of RIPK3 via FADD-mediated recruitment of CASP8, which cleaves RIPK1 and limits TNF-induced necroptosis. Its function is as follows. Key innate sensor that recognizes and binds Z-RNA structures, which are produced by a number of viruses, such as herpesvirus, orthomyxovirus or flavivirus, and triggers different forms of cell death. ZBP1 acts as an essential mediator of pyroptosis, necroptosis and apoptosis (PANoptosis), an integral part of host defense against pathogens, by activating RIPK3, caspase-8 (CASP8), and the NLRP3 inflammasome. Key activator of necroptosis, a programmed cell death process in response to death-inducing TNF-alpha family members, via its ability to bind Z-RNA: once activated upon Z-RNA-binding, ZBP1 interacts and stimulates RIPK3 kinase, which phosphorylates and activates MLKL, triggering execution of programmed necrosis. In addition to TNF-induced necroptosis, necroptosis can also take place in the nucleus in response to orthomyxoviruses infection: ZBP1 recognizes and binds Z-RNA structures that are produced in infected nuclei by orthomyxoviruses, such as the influenza A virus (IAV), leading to ZBP1 activation, RIPK3 stimulation and subsequent MLKL phosphorylation, triggering disruption of the nuclear envelope and leakage of cellular DNA into the cytosol. ZBP1-dependent cell death in response to IAV infection promotes interleukin-1 alpha (IL1A) induction in an NLRP3-inflammasome-independent manner: IL1A expression is required for the optimal interleukin-1 beta (IL1B) production, and together, these cytokines promote infiltration of inflammatory neutrophils to the lung, leading to the formation of neutrophil extracellular traps. In addition to its direct role in driving necroptosis via its ability to sense Z-RNAs, also involved in PANoptosis triggered in response to bacterial infection: component of the AIM2 PANoptosome complex, a multiprotein complex that triggers PANoptosis. Also acts as the apical sensor of fungal infection responsible for activating PANoptosis. Involved in CASP8-mediated cell death via its interaction with RIPK1 but independently of its ability to sense Z-RNAs. In some cell types, also able to restrict viral replication by promoting cell death-independent responses. In response to flavivirus infection in neurons, promotes a cell death-independent pathway that restricts viral replication: together with RIPK3, promotes a death-independent transcriptional program that modifies the cellular metabolism via up-regulation expression of the enzyme ACOD1/IRG1 and production of the metabolite itaconate. Itaconate inhibits the activity of succinate dehydrogenase, generating a metabolic state in neurons that suppresses replication of viral genomes. This is Z-DNA-binding protein 1 from Mus musculus (Mouse).